A 140-amino-acid chain; its full sequence is Putative pre-16S rRNA nuclease (140 aa).

It belongs to the YqgF nuclease family.

It localises to the cytoplasm. Functionally, could be a nuclease involved in processing of the 5'-end of pre-16S rRNA. The polypeptide is Putative pre-16S rRNA nuclease (Actinobacillus succinogenes (strain ATCC 55618 / DSM 22257 / CCUG 43843 / 130Z)).